A 240-amino-acid polypeptide reads, in one-letter code: CRISPR-associated protein Cas5 3 (240 aa).

The protein belongs to the CRISPR-associated protein Cas5 family. Subtype I-A/Apern subfamily. As to quaternary structure, part of the aCascade ribonucleoprotein complex.

Its function is as follows. CRISPR (clustered regularly interspaced short palindromic repeat) is an adaptive immune system that provides protection against mobile genetic elements (viruses, transposable elements and conjugative plasmids). CRISPR clusters contain spacers, sequences complementary to antecedent mobile elements, and target invading nucleic acids. CRISPR clusters are transcribed and processed into CRISPR RNA (crRNA). This chain is CRISPR-associated protein Cas5 3 (cas5c), found in Saccharolobus solfataricus (strain ATCC 35092 / DSM 1617 / JCM 11322 / P2) (Sulfolobus solfataricus).